Reading from the N-terminus, the 335-residue chain is Fructose-1,6-bisphosphatase class 1 (335 aa).

4 residues coordinate Mg(2+): glutamate 93, aspartate 117, leucine 119, and aspartate 120. Substrate is bound by residues 120 to 123 (DGSS), asparagine 213, tyrosine 244, and lysine 274. Residue glutamate 280 coordinates Mg(2+).

This sequence belongs to the FBPase class 1 family. As to quaternary structure, homotetramer. It depends on Mg(2+) as a cofactor.

The protein resides in the cytoplasm. It carries out the reaction beta-D-fructose 1,6-bisphosphate + H2O = beta-D-fructose 6-phosphate + phosphate. Its pathway is carbohydrate biosynthesis; gluconeogenesis. The polypeptide is Fructose-1,6-bisphosphatase class 1 (Flavobacterium psychrophilum (strain ATCC 49511 / DSM 21280 / CIP 103535 / JIP02/86)).